A 421-amino-acid polypeptide reads, in one-letter code: UDP-N-acetylglucosamine 1-carboxyvinyltransferase 2 (421 aa).

22–23 (KN) serves as a coordination point for phosphoenolpyruvate. Position 94 (Arg-94) interacts with UDP-N-acetyl-alpha-D-glucosamine. Catalysis depends on Cys-118, which acts as the Proton donor. 2-(S-cysteinyl)pyruvic acid O-phosphothioketal is present on Cys-118. UDP-N-acetyl-alpha-D-glucosamine is bound by residues Asp-308 and Ile-330.

Belongs to the EPSP synthase family. MurA subfamily.

It localises to the cytoplasm. It carries out the reaction phosphoenolpyruvate + UDP-N-acetyl-alpha-D-glucosamine = UDP-N-acetyl-3-O-(1-carboxyvinyl)-alpha-D-glucosamine + phosphate. The protein operates within cell wall biogenesis; peptidoglycan biosynthesis. Cell wall formation. Adds enolpyruvyl to UDP-N-acetylglucosamine. This Lactococcus lactis subsp. lactis (strain IL1403) (Streptococcus lactis) protein is UDP-N-acetylglucosamine 1-carboxyvinyltransferase 2.